The chain runs to 106 residues: Thioredoxin-like protein YusE (106 aa).

A Thioredoxin domain is found at 1-101 (MKELQEHELD…LYELIKQKSS (101 aa)). The cysteines at positions 26 and 29 are disulfide-linked.

This Bacillus subtilis (strain 168) protein is Thioredoxin-like protein YusE (yusE).